The primary structure comprises 277 residues: Large ribosomal subunit protein uL2c (277 aa).

Residues 30-60 are disordered; that stretch reads RKKLTSGQHSGKGRNNRGIITSRHRGGGHKR. Positions 51 to 60 are enriched in basic residues; it reads SRHRGGGHKR.

This sequence belongs to the universal ribosomal protein uL2 family. In terms of assembly, part of the 50S ribosomal subunit.

It is found in the plastid. The protein resides in the chloroplast. The chain is Large ribosomal subunit protein uL2c (rpl2) from Angiopteris evecta (Mule's foot fern).